The following is a 68-amino-acid chain: Putative transcript Y 10 protein (68 aa).

In Homo sapiens (Human), this protein is Putative transcript Y 10 protein (TTTY10).